The chain runs to 476 residues: Dihydrolipoyl dehydrogenase (476 aa).

FAD contacts are provided by residues 36–45 (EHQERLGGVC), Lys54, and Ala117. Residues Cys45 and Cys50 are joined by a disulfide bond. Residues 182 to 186 (GGGII), Asp205, Val238, and 271 to 274 (AIGR) contribute to the NAD(+) site. FAD-binding residues include Asp314 and Ala322. His446 functions as the Proton acceptor in the catalytic mechanism.

This sequence belongs to the class-I pyridine nucleotide-disulfide oxidoreductase family. In terms of assembly, homodimer. FAD serves as cofactor.

Its subcellular location is the cytoplasm. It catalyses the reaction N(6)-[(R)-dihydrolipoyl]-L-lysyl-[protein] + NAD(+) = N(6)-[(R)-lipoyl]-L-lysyl-[protein] + NADH + H(+). Its function is as follows. Lipoamide dehydrogenase is a component of the alpha-ketoacid dehydrogenase complexes. The chain is Dihydrolipoyl dehydrogenase (lpdA) from Buchnera aphidicola subsp. Schizaphis graminum (strain Sg).